The chain runs to 398 residues: uncharacterized protein (398 aa).

In terms of domain architecture, Radical SAM core spans 21-253 (TNFGPTNLII…WQLTSTSEPE (233 aa)). Cysteine 37, cysteine 41, and cysteine 44 together coordinate [4Fe-4S] cluster.

Belongs to the radical SAM superfamily. Anaerobic sulfatase-maturating enzyme family. It depends on [4Fe-4S] cluster as a cofactor.

This is an uncharacterized protein from Synechocystis sp. (strain ATCC 27184 / PCC 6803 / Kazusa).